Reading from the N-terminus, the 169-residue chain is MNENFICNKYFVTILIIIIIILIVLLIVFLTKKNSRIERMENIDKLTFAEKPWSNTQDADTYKIVDNDFDKYVDELTKLLGNKNRAKRKDEVYRDYIQSKPINKNNQQTKNTPTPLDDRPDLSQCQPCICPNDRYIPNSESSENDNHLDREIRKKISELGSYVKNKYKR.

A helical membrane pass occupies residues 10–30 (YFVTILIIIIIILIVLLIVFL). A disordered region spans residues 98 to 123 (QSKPINKNNQQTKNTPTPLDDRPDLS). Low complexity predominate over residues 100-115 (KPINKNNQQTKNTPTP).

Its subcellular location is the membrane. This is an uncharacterized protein from Acanthamoeba polyphaga (Amoeba).